The primary structure comprises 114 residues: UPF0473 protein OEOE_1164 (114 aa).

Belongs to the UPF0473 family.

This Oenococcus oeni (strain ATCC BAA-331 / PSU-1) protein is UPF0473 protein OEOE_1164.